The following is a 435-amino-acid chain: ATP-dependent protease ATPase subunit HslU (435 aa).

ATP is bound by residues Ile-18, 60–65, Asp-248, Glu-313, and Arg-385; that span reads GVGKTE.

The protein belongs to the ClpX chaperone family. HslU subfamily. In terms of assembly, a double ring-shaped homohexamer of HslV is capped on each side by a ring-shaped HslU homohexamer. The assembly of the HslU/HslV complex is dependent on binding of ATP.

The protein resides in the cytoplasm. ATPase subunit of a proteasome-like degradation complex; this subunit has chaperone activity. The binding of ATP and its subsequent hydrolysis by HslU are essential for unfolding of protein substrates subsequently hydrolyzed by HslV. HslU recognizes the N-terminal part of its protein substrates and unfolds these before they are guided to HslV for hydrolysis. The sequence is that of ATP-dependent protease ATPase subunit HslU from Rhizobium etli (strain CIAT 652).